Consider the following 323-residue polypeptide: tRNA uridine(34) hydroxylase (323 aa).

The region spanning 127-221 is the Rhodanese domain; that stretch reads QDENTVVLDA…YGQDPEVQGD (95 aa). The active-site Cysteine persulfide intermediate is the Cys181.

Belongs to the TrhO family.

It carries out the reaction uridine(34) in tRNA + AH2 + O2 = 5-hydroxyuridine(34) in tRNA + A + H2O. Catalyzes oxygen-dependent 5-hydroxyuridine (ho5U) modification at position 34 in tRNAs. This Oceanobacillus iheyensis (strain DSM 14371 / CIP 107618 / JCM 11309 / KCTC 3954 / HTE831) protein is tRNA uridine(34) hydroxylase.